The following is a 249-amino-acid chain: Cytochrome c oxidase subunit 2 (249 aa).

The next 2 helical transmembrane spans lie at 40 to 60 (NIMF…YTIT) and 81 to 101 (IIWT…SFIL). Residues histidine 184, cysteine 219, glutamate 221, cysteine 223, histidine 227, and methionine 230 each coordinate Cu cation. Glutamate 221 is a binding site for Mg(2+).

It belongs to the cytochrome c oxidase subunit 2 family. As to quaternary structure, component of the cytochrome c oxidase (complex IV, CIV), a multisubunit enzyme composed of a catalytic core of 3 subunits and several supernumerary subunits. The complex exists as a monomer or a dimer and forms supercomplexes (SCs) in the inner mitochondrial membrane with ubiquinol-cytochrome c oxidoreductase (cytochrome b-c1 complex, complex III, CIII). Cu cation is required as a cofactor.

It is found in the mitochondrion inner membrane. It carries out the reaction 4 Fe(II)-[cytochrome c] + O2 + 8 H(+)(in) = 4 Fe(III)-[cytochrome c] + 2 H2O + 4 H(+)(out). In terms of biological role, component of the cytochrome c oxidase, the last enzyme in the mitochondrial electron transport chain which drives oxidative phosphorylation. The respiratory chain contains 3 multisubunit complexes succinate dehydrogenase (complex II, CII), ubiquinol-cytochrome c oxidoreductase (cytochrome b-c1 complex, complex III, CIII) and cytochrome c oxidase (complex IV, CIV), that cooperate to transfer electrons derived from NADH and succinate to molecular oxygen, creating an electrochemical gradient over the inner membrane that drives transmembrane transport and the ATP synthase. Cytochrome c oxidase is the component of the respiratory chain that catalyzes the reduction of oxygen to water. Electrons originating from reduced cytochrome c in the intermembrane space (IMS) are transferred via the dinuclear copper A center (CU(A)) of subunit 2 and heme A of subunit 1 to the active site in subunit 1, a binuclear center (BNC) formed by heme A3 and copper B (CU(B)). The BNC reduces molecular oxygen to 2 water molecules using 4 electrons from cytochrome c in the IMS and 4 protons from the mitochondrial matrix. The chain is Cytochrome c oxidase subunit 2 (COX2) from Vanderwaltozyma polyspora (strain ATCC 22028 / DSM 70294 / BCRC 21397 / CBS 2163 / NBRC 10782 / NRRL Y-8283 / UCD 57-17) (Kluyveromyces polysporus).